Consider the following 328-residue polypeptide: Homeobox protein Hox-C13 (328 aa).

The interval 23–48 (AAESGSGGGGGGGGAGGAGGGCSGAS) is disordered. Gly residues predominate over residues 27-45 (GSGGGGGGGGAGGAGGGCS). The segment at residues 258–317 (GRKKRVPYTKVQLKELEKEYAASKFITKEKRRRISATTNLSERQVTIWFQNRRVKEKKVV) is a DNA-binding region (homeobox).

The protein belongs to the Abd-B homeobox family. In terms of tissue distribution, expressed in differentiating keratinocytes. In the hair follicle lower matrix, expressed in all 3 hair shaft-forming compartments, i.e. cuticle, cortex and medulla. Expression stops sharply at the boundary with the germinal matrix compartment.

It is found in the nucleus. Functionally, transcription factor which plays a role in hair follicle differentiation. Regulates FOXQ1 expression and that of other hair-specific genes. The sequence is that of Homeobox protein Hox-C13 (Hoxc13) from Mus musculus (Mouse).